The following is a 255-amino-acid chain: MGAALELREVDSELVIKRFTSALPYYEKYAVAQHRIGERLADLLTATGRHHFEHVLEYGCGCGVYTRQLAQTVTVKQWTLNDLCPVCEEYIRVSPVSFYAGEAETMPHTDTYDLITSASAFQWFKDPESFIRTVAGLLRPDGIFLFNTFSPDNLPEIRTITNRGLHYPSTEALMKWLGAAFSAVYKHEEQIVLTFDSPRDVLMHLKRTGVTATPRHEEVWTRSRLARFDQAYRERFSTPDGQVTLTYTPLYFLAK.

The protein belongs to the methyltransferase superfamily.

The catalysed reaction is malonyl-[ACP] + S-adenosyl-L-methionine = malonyl-[ACP] methyl ester + S-adenosyl-L-homocysteine. The protein operates within cofactor biosynthesis; biotin biosynthesis. Functionally, converts the free carboxyl group of a malonyl-thioester to its methyl ester by transfer of a methyl group from S-adenosyl-L-methionine (SAM). It allows to synthesize pimeloyl-ACP via the fatty acid synthetic pathway. This chain is Malonyl-[acyl-carrier protein] O-methyltransferase, found in Porphyromonas gingivalis (strain ATCC BAA-308 / W83).